Consider the following 28-residue polypeptide: Phospholipase A2 3 (28 aa).

Belongs to the phospholipase A2 family. Group I subfamily. Ca(2+) is required as a cofactor. In terms of tissue distribution, expressed by the venom gland.

Its subcellular location is the secreted. The catalysed reaction is a 1,2-diacyl-sn-glycero-3-phosphocholine + H2O = a 1-acyl-sn-glycero-3-phosphocholine + a fatty acid + H(+). Its function is as follows. Snake venom phospholipase A2 (PLA2) that inhibits neuromuscular transmission by blocking acetylcholine release from the nerve termini. PLA2 catalyzes the calcium-dependent hydrolysis of the 2-acyl groups in 3-sn-phosphoglycerides. In Micrurus nigrocinctus (Central American coral snake), this protein is Phospholipase A2 3.